A 592-amino-acid polypeptide reads, in one-letter code: NADH-ubiquinone oxidoreductase chain 5 (592 aa).

Transmembrane regions (helical) follow at residues 36–56, 68–88, 89–109, 132–152, 169–189, 196–216, 229–249, 256–276, 279–299, 322–342, 364–386, 406–426, 451–471, and 534–554; these read LSMV…IYAI, FYII…SDNY, IMMF…ISFW, LFVI…FETM, MMLL…GWLL, TPVS…FVLV, LLVM…MAVV, VMAL…GSSA, LAMY…MSAG, LPFS…MPGL, YIMY…RVTY, STHM…LGYA, LPAM…LTTV, and ALIN…IVFF.

It belongs to the complex I subunit 5 family.

Its subcellular location is the mitochondrion inner membrane. It carries out the reaction a ubiquinone + NADH + 5 H(+)(in) = a ubiquinol + NAD(+) + 4 H(+)(out). In terms of biological role, core subunit of the mitochondrial membrane respiratory chain NADH dehydrogenase (Complex I) that is believed to belong to the minimal assembly required for catalysis. Complex I functions in the transfer of electrons from NADH to the respiratory chain. The immediate electron acceptor for the enzyme is believed to be ubiquinone. This is NADH-ubiquinone oxidoreductase chain 5 (ND5) from Debaryomyces hansenii (strain ATCC 36239 / CBS 767 / BCRC 21394 / JCM 1990 / NBRC 0083 / IGC 2968) (Yeast).